We begin with the raw amino-acid sequence, 780 residues long: Catenin beta-1 (780 aa).

The disordered stretch occupies residues 34-56 (GIHSGATTTAPSLSGKGNPEDDD). ARM repeat units lie at residues 140–179 (NYQD…QLSK), 224–263 (REGL…NLLL), 266–305 (EGAK…ILAY), 350–389 (SSNK…NLSD), 399–430 (GLLG…TCNN), 431–472 (YKNK…HLTS), 478–518 (EMAQ…NLAL), 520–561 (PANH…QFVE), 583–622 (IHNR…ELAQ), and 624–663 (KEAA…RMSE). Residues 735-744 (EHEMAGHHPG) are compositionally biased toward basic and acidic residues. The interval 735 to 770 (EHEMAGHHPGPDYPVDGLPDLGHTQDLIDGLPPGDS) is disordered.

Belongs to the beta-catenin family. Interacts with adnpa. Interacts with cdh1 during oogenesis and in the unfertilized egg. Interacts with ctnna1 and cdh2. Phosphorylation by gsk3b promotes ubiquitination and subsequent degradation by the proteasome. In terms of processing, ubiquitinated when phosphorylated by gsk3b, leading to its degradation. Expressed in the successional lamina, also expressed in both the epithelial and mesenchymal cells of the developing replacement tooth (at protein level). Expressed in the enamel organ as well as in the inner and outer dental epithelium during replacement tooth morphogenesis (at protein level). Expressed in the differentiated, polarized odontoblasts that line the dentine matrix as well as in the inner and outer dental epithelium during tooth cytodifferentiation (at protein level). Expressed in the reduced enamel organ, odontoblasts and weakly at the center of the dental papilla of the functional tooth as well as in the epithelial crypts surrounding the functional tooth (at protein level). Expressed in the liver (at protein level). Expressed at intercalated disks in the heart (at protein level). Expressed in the ovary.

It localises to the cytoplasm. It is found in the nucleus. The protein localises to the cell membrane. Its subcellular location is the cell junction. The protein resides in the adherens junction. Its function is as follows. Key downstream component of the canonical Wnt signaling pathway. In the absence of Wnt, forms a complex with axin1, axin2, apc, csnk1a1 and gsk3b that promotes phosphorylation on N-terminal Ser and Thr residues and ubiquitination of ctnnb1 and its subsequent degradation by the proteasome. In the presence of Wnt ligand, ctnnb1 is not ubiquitinated and accumulates in the nucleus, where it acts as a coactivator for transcription factors of the TCF/LEF family, leading to activate Wnt responsive genes. Plays a key role in dorsoventral patterning: in prospective ventral blastomeres, its down-regulation by axin1 and axin2 leads to inhibit the Wnt signaling pathway, while in prospective dorsal blastomeres, degradation of axin results in stabilization and nuclear translocation of ctnnb1. The protein is Catenin beta-1 of Danio rerio (Zebrafish).